Reading from the N-terminus, the 299-residue chain is ATP phosphoribosyltransferase (299 aa).

Belongs to the ATP phosphoribosyltransferase family. Long subfamily. Equilibrium between an active dimeric form, an inactive hexameric form and higher aggregates. Interconversion between the various forms is largely reversible and is influenced by the natural substrates and inhibitors of the enzyme. Mg(2+) is required as a cofactor.

Its subcellular location is the cytoplasm. The enzyme catalyses 1-(5-phospho-beta-D-ribosyl)-ATP + diphosphate = 5-phospho-alpha-D-ribose 1-diphosphate + ATP. It functions in the pathway amino-acid biosynthesis; L-histidine biosynthesis; L-histidine from 5-phospho-alpha-D-ribose 1-diphosphate: step 1/9. Its activity is regulated as follows. Feedback inhibited by histidine. Catalyzes the condensation of ATP and 5-phosphoribose 1-diphosphate to form N'-(5'-phosphoribosyl)-ATP (PR-ATP). Has a crucial role in the pathway because the rate of histidine biosynthesis seems to be controlled primarily by regulation of HisG enzymatic activity. The sequence is that of ATP phosphoribosyltransferase from Buchnera aphidicola subsp. Baizongia pistaciae (strain Bp).